The primary structure comprises 86 residues: Small ribosomal subunit protein bS20 (86 aa).

Residues 1 to 25 are disordered; it reads MTNIKSQQKRNRTNERARLRNKSVK.

This sequence belongs to the bacterial ribosomal protein bS20 family.

Functionally, binds directly to 16S ribosomal RNA. The sequence is that of Small ribosomal subunit protein bS20 from Mycobacterium leprae (strain Br4923).